Reading from the N-terminus, the 596-residue chain is Aspartate--tRNA(Asp/Asn) ligase (596 aa).

Residue Glu175 coordinates L-aspartate. The tract at residues Gln199–Lys202 is aspartate. Residues Arg221 and His454 each coordinate L-aspartate. Arg221 to Glu223 is a binding site for ATP. Position 488 (Glu488) interacts with ATP. Arg495 is an L-aspartate binding site. Residue Gly540–Arg543 coordinates ATP.

The protein belongs to the class-II aminoacyl-tRNA synthetase family. Type 1 subfamily. In terms of assembly, homodimer.

The protein resides in the cytoplasm. The enzyme catalyses tRNA(Asx) + L-aspartate + ATP = L-aspartyl-tRNA(Asx) + AMP + diphosphate. In terms of biological role, aspartyl-tRNA synthetase with relaxed tRNA specificity since it is able to aspartylate not only its cognate tRNA(Asp) but also tRNA(Asn). Reaction proceeds in two steps: L-aspartate is first activated by ATP to form Asp-AMP and then transferred to the acceptor end of tRNA(Asp/Asn). The protein is Aspartate--tRNA(Asp/Asn) ligase of Rhizobium johnstonii (strain DSM 114642 / LMG 32736 / 3841) (Rhizobium leguminosarum bv. viciae).